The sequence spans 181 residues: ATP synthase subunit delta (181 aa).

The protein belongs to the ATPase delta chain family. F-type ATPases have 2 components, F(1) - the catalytic core - and F(0) - the membrane proton channel. F(1) has five subunits: alpha(3), beta(3), gamma(1), delta(1), epsilon(1). F(0) has three main subunits: a(1), b(2) and c(10-14). The alpha and beta chains form an alternating ring which encloses part of the gamma chain. F(1) is attached to F(0) by a central stalk formed by the gamma and epsilon chains, while a peripheral stalk is formed by the delta and b chains.

It localises to the cell inner membrane. Its function is as follows. F(1)F(0) ATP synthase produces ATP from ADP in the presence of a proton or sodium gradient. F-type ATPases consist of two structural domains, F(1) containing the extramembraneous catalytic core and F(0) containing the membrane proton channel, linked together by a central stalk and a peripheral stalk. During catalysis, ATP synthesis in the catalytic domain of F(1) is coupled via a rotary mechanism of the central stalk subunits to proton translocation. This protein is part of the stalk that links CF(0) to CF(1). It either transmits conformational changes from CF(0) to CF(1) or is implicated in proton conduction. This is ATP synthase subunit delta from Fervidobacterium nodosum (strain ATCC 35602 / DSM 5306 / Rt17-B1).